A 486-amino-acid polypeptide reads, in one-letter code: Homoserine O-acetyltransferase (486 aa).

Positions 66 to 436 (NVLVICHALT…PEGHDAFLLE (371 aa)) constitute an AB hydrolase-1 domain. Ser162 is a catalytic residue. The active-site Nucleophile is the Ser162. Positions 248–274 (KFSRRSPSIAQQQKAQKAEVRKPSTVS) are disordered. The span at 250–262 (SRRSPSIAQQQKA) shows a compositional bias: polar residues. Active-site residues include Asp401 and His430.

This sequence belongs to the AB hydrolase superfamily. MetX family.

The catalysed reaction is L-homoserine + acetyl-CoA = O-acetyl-L-homoserine + CoA. The protein operates within amino-acid biosynthesis; L-methionine biosynthesis via de novo pathway; O-acetyl-L-homoserine from L-homoserine: step 1/1. Its function is as follows. Commits homoserine to the methionine biosynthesis pathway by catalyzing its O-acetylation. The chain is Homoserine O-acetyltransferase (MET2) from Saccharomyces pastorianus (Lager yeast).